A 68-amino-acid chain; its full sequence is Alpha-conotoxin-like Lp1.2 (68 aa).

Residues 1 to 21 (MGMRMMFTVFLLVVLATTVVS) form the signal peptide. Residues 22–48 (FTSDRAFDGRNAAASDKASDLISLAVR) constitute a propeptide that is removed on maturation. 2 disulfides stabilise this stretch: Cys-50–Cys-56 and Cys-51–Cys-64. A ser-Xaa-Pro motif, crucial for potent interaction with nAChR region spans residues 52 to 54 (SHP). At Cys-64 the chain carries Cysteine amide. The propeptide occupies 65–68 (GGKR).

This sequence belongs to the conotoxin A superfamily. In terms of tissue distribution, expressed by the venom duct.

It is found in the secreted. Alpha-conotoxins act on postsynaptic membranes, they bind to the nicotinic acetylcholine receptors (nAChR) and thus inhibit them. The chain is Alpha-conotoxin-like Lp1.2 from Conus leopardus (Leopard cone).